The following is a 1040-amino-acid chain: Vacuolar membrane protease (1040 aa).

The Cytoplasmic segment spans residues 1 to 9 (MINPISFRP). Residues 10-30 (GPVTFWTTLIYLALLIPIVII) traverse the membrane as a helical segment. The Vacuolar portion of the chain corresponds to 31-405 (NEEPPAAPKT…SFVLFGLRGM (375 aa)). N-linked (GlcNAc...) asparagine glycans are attached at residues asparagine 48, asparagine 117, asparagine 120, and asparagine 129. 2 residues coordinate Zn(2+): histidine 186 and aspartate 198. The Proton acceptor role is filled by glutamate 232. Residues glutamate 233, glutamate 258, and histidine 331 each contribute to the Zn(2+) site. Residues 406–426 (FAWSLTLLIATPLILVGITWL) traverse the membrane as a helical segment. Residues 427–436 (LRNLDKDYFF) lie on the Cytoplasmic side of the membrane. A helical transmembrane segment spans residues 437-456 (TSTVKTKEHPEYEAVPIGGW). Over 457-462 (KGFFRW) the chain is Vacuolar. The helical transmembrane segment at 463 to 483 (AMMVSIFYFSFWMIMRGANFV) threads the bilayer. The Cytoplasmic segment spans residues 484-490 (RPSALHR). A helical transmembrane segment spans residues 491–511 (GYANLWLFVFGWIVLVAVTAL). At 512–521 (EDRRRIAAGY) the chain is on the vacuolar side. Residues 522 to 542 (IFVFLESAIFLSCLISFVELL) traverse the membrane as a helical segment. The Cytoplasmic segment spans residues 543 to 715 (ALPRKSAYAL…YEHEQDWSGH (173 aa)). A disordered region spans residues 563–680 (HSGYQGYRDS…NGTNDRGRTT (118 aa)). 2 stretches are compositionally biased toward low complexity: residues 577-594 (SSGARAESSASAGSPSSP) and 616-626 (APSVAAHSSQP). A compositionally biased stretch (polar residues) spans 636–647 (GRSTSAPIPSTT). Positions 650-661 (DEDESEDDDDEA) are enriched in acidic residues. Residues 716-736 (LPSWAWFFQFLLLGPFMIILA) traverse the membrane as a helical segment. The Vacuolar segment spans residues 737–758 (AQTGLMLTDAVYQTGSDGSKLF). A helical membrane pass occupies residues 759-779 (TPYLMIFFFTLLLILPLTPFI). Residues 780 to 785 (HRVTHH) are Cytoplasmic-facing. Residues 786–806 (IPVFLLVVFIVTLTYNLIAFP) traverse the membrane as a helical segment. Residues 807 to 1040 (FSANNRYKAF…VEGRKAFKIV (234 aa)) lie on the Vacuolar side of the membrane. N-linked (GlcNAc...) asparagine glycosylation is present at asparagine 900.

It belongs to the peptidase M28 family. It depends on Zn(2+) as a cofactor.

It localises to the vacuole membrane. Its function is as follows. May be involved in vacuolar sorting and osmoregulation. This Sordaria macrospora (strain ATCC MYA-333 / DSM 997 / K(L3346) / K-hell) protein is Vacuolar membrane protease.